A 404-amino-acid chain; its full sequence is Formate-dependent phosphoribosylglycinamide formyltransferase (404 aa).

N(1)-(5-phospho-beta-D-ribosyl)glycinamide contacts are provided by residues 25–26 (EL) and E85. Residues R118, K159, 164-169 (SSGKGQ), 199-202 (EGFV), and E207 each bind ATP. Residues 123–318 (RLAAEELGLP…EFELHARAIL (196 aa)) enclose the ATP-grasp domain. Mg(2+) contacts are provided by E277 and E289. N(1)-(5-phospho-beta-D-ribosyl)glycinamide-binding positions include D296, K365, and 372 to 373 (RR).

It belongs to the PurK/PurT family. In terms of assembly, homodimer.

It catalyses the reaction N(1)-(5-phospho-beta-D-ribosyl)glycinamide + formate + ATP = N(2)-formyl-N(1)-(5-phospho-beta-D-ribosyl)glycinamide + ADP + phosphate + H(+). It participates in purine metabolism; IMP biosynthesis via de novo pathway; N(2)-formyl-N(1)-(5-phospho-D-ribosyl)glycinamide from N(1)-(5-phospho-D-ribosyl)glycinamide (formate route): step 1/1. Its function is as follows. Involved in the de novo purine biosynthesis. Catalyzes the transfer of formate to 5-phospho-ribosyl-glycinamide (GAR), producing 5-phospho-ribosyl-N-formylglycinamide (FGAR). Formate is provided by PurU via hydrolysis of 10-formyl-tetrahydrofolate. This chain is Formate-dependent phosphoribosylglycinamide formyltransferase, found in Burkholderia thailandensis (strain ATCC 700388 / DSM 13276 / CCUG 48851 / CIP 106301 / E264).